The chain runs to 158 residues: Transcription elongation factor GreA (158 aa).

The protein belongs to the GreA/GreB family.

Its function is as follows. Necessary for efficient RNA polymerase transcription elongation past template-encoded arresting sites. The arresting sites in DNA have the property of trapping a certain fraction of elongating RNA polymerases that pass through, resulting in locked ternary complexes. Cleavage of the nascent transcript by cleavage factors such as GreA or GreB allows the resumption of elongation from the new 3'terminus. GreA releases sequences of 2 to 3 nucleotides. The sequence is that of Transcription elongation factor GreA from Agrobacterium fabrum (strain C58 / ATCC 33970) (Agrobacterium tumefaciens (strain C58)).